The chain runs to 290 residues: Membrane protein insertase YidC 2 (290 aa).

The N-terminal stretch at 1-19 (MKKKALLPLFLGIMIFLAG) is a signal peptide. Cys-20 is lipidated: N-palmitoyl cysteine. The S-diacylglycerol cysteine moiety is linked to residue Cys-20. The next 5 helical transmembrane spans lie at 56–76 (FGLAIIVLVLFIRLILLPFML), 134–154 (MLGCLPILIQMPIIMGLYFVL), 176–196 (PDIWITVIAGVLYFIQAVVSS), 211–231 (MVISPIMIIWISLQASSALGL), and 232–252 (YWSVSALFLVIQTHFANIYYS). A disordered region spans residues 266–290 (YEREHNPSSKKKGKNTQVVSKKNKK). The segment covering 280 to 290 (NTQVVSKKNKK) has biased composition (polar residues).

The protein belongs to the OXA1/ALB3/YidC family. Type 2 subfamily.

The protein localises to the cell membrane. In terms of biological role, required for the insertion and/or proper folding and/or complex formation of integral membrane proteins into the membrane. Involved in integration of membrane proteins that insert both dependently and independently of the Sec translocase complex, as well as at least some lipoproteins. The chain is Membrane protein insertase YidC 2 from Staphylococcus epidermidis (strain ATCC 35984 / DSM 28319 / BCRC 17069 / CCUG 31568 / BM 3577 / RP62A).